The chain runs to 360 residues: sn-glycerol-3-phosphate import ATP-binding protein UgpC (360 aa).

The 232-residue stretch at 4–235 folds into the ABC transporter domain; that stretch reads LSLKGVRKSY…PATTFVASFI (232 aa). 37-44 is an ATP binding site; that stretch reads GPSGCGKS.

This sequence belongs to the ABC transporter superfamily. sn-glycerol-3-phosphate importer (TC 3.A.1.1.3) family. As to quaternary structure, the complex is composed of two ATP-binding proteins (UgpC), two transmembrane proteins (UgpA and UgpE) and a solute-binding protein (UgpB).

It localises to the cell inner membrane. It carries out the reaction sn-glycerol 3-phosphate(out) + ATP + H2O = sn-glycerol 3-phosphate(in) + ADP + phosphate + H(+). Its function is as follows. Part of the ABC transporter complex UgpBAEC involved in sn-glycerol-3-phosphate (G3P) import. Responsible for energy coupling to the transport system. This chain is sn-glycerol-3-phosphate import ATP-binding protein UgpC, found in Burkholderia pseudomallei (strain 1710b).